A 140-amino-acid chain; its full sequence is Pre-mRNA-splicing factor NTC20 (140 aa).

Ser-139 bears the Phosphoserine mark.

As to quaternary structure, belongs to the NTC complex (or PRP19-associated complex), composed of at least CEF1, CLF1, ISY1, NTC20, SNT309, SYF1, SYF2, and PRP19. The NTC complex associates with the spliceosome after the release of the U1 and U4 snRNAs and forms the CWC spliceosome subcomplex (or CEF1-associated complex) reminiscent of a late-stage spliceosome composed also of the U2, U5 and U6 snRNAs and at least BUD13, BRR2, CDC40, CUS1, CWC2, CWC15, CWC21, CWC22, CWC23, CWC24, CWC25, CWC27, ECM2, HSH155, IST3, LEA1, MSL1, PRP8, PRP9, PRP11, PRP21, PRP22, PRP45, PRP46, SLU7, SMB1, SMD1, SMD2, SMD3, SMX2, SMX3, SNU114, SPP2, RSE1 and YJU2. Interacts with CEF1, CLF1, ISY1, PRP46, and SYF1.

It is found in the nucleus. Functionally, involved in pre-mRNA splicing. As a component of the NTC complex, associates to the spliceosome to mediate conformational rearrangement or to stabilize the structure of the spliceosome after U4 snRNA dissociation, which leads to spliceosome maturation. This chain is Pre-mRNA-splicing factor NTC20 (NTC20), found in Saccharomyces cerevisiae (strain ATCC 204508 / S288c) (Baker's yeast).